Consider the following 361-residue polypeptide: Putative agmatine deiminase (361 aa).

The Amidino-cysteine intermediate role is filled by Cys354.

This sequence belongs to the agmatine deiminase family.

It carries out the reaction agmatine + H2O = N-carbamoylputrescine + NH4(+). This Streptococcus pneumoniae (strain Hungary19A-6) protein is Putative agmatine deiminase.